The primary structure comprises 544 residues: Baeyer-Villiger monooxygenase (544 aa).

Residues F27, E47, W56, D67, Y73, and V119 each contribute to the FAD site.

Belongs to the FAD-binding monooxygenase family. FAD serves as cofactor.

Its function is as follows. Catalyzes a Baeyer-Villiger oxidation reaction, i.e. the insertion of an oxygen atom into a carbon-carbon bond adjacent to a carbonyl, which converts ketones to esters or lactones using NADPH as an electron donor. Besides cycloalkanones, can use cyclic alpha,beta-unsaturated ketones as substrates, leading to enol-lactones. Can also act on methylated cycloalkanones and methylated cycloalkenones with high enantioselectivity in some cases. This chain is Baeyer-Villiger monooxygenase, found in Parvibaculum lavamentivorans (strain DS-1 / DSM 13023 / NCIMB 13966).